Reading from the N-terminus, the 347-residue chain is Phenylalanine--tRNA ligase alpha subunit (347 aa).

Residues 83 to 111 (QNLSGGDDSGADPTFDPTLPGTRPSLGHI) form a disordered region. Residue E274 coordinates Mg(2+).

This sequence belongs to the class-II aminoacyl-tRNA synthetase family. Phe-tRNA synthetase alpha subunit type 1 subfamily. As to quaternary structure, tetramer of two alpha and two beta subunits. Requires Mg(2+) as cofactor.

It localises to the cytoplasm. The catalysed reaction is tRNA(Phe) + L-phenylalanine + ATP = L-phenylalanyl-tRNA(Phe) + AMP + diphosphate + H(+). This is Phenylalanine--tRNA ligase alpha subunit from Rhodopirellula baltica (strain DSM 10527 / NCIMB 13988 / SH1).